Here is a 492-residue protein sequence, read N- to C-terminus: Peptidyl-prolyl cis-trans isomerase-like 4 (492 aa).

Residues Met-1–Ile-161 form the PPIase cyclophilin-type domain. The tract at residues Asp-167 to Ser-188 is disordered. Over residues Arg-177 to Asp-187 the composition is skewed to basic and acidic residues. Ser-178 is modified (phosphoserine). Thr-182 bears the Phosphothreonine mark. Residues Lys-201, Lys-212, and Lys-218 each participate in a glycyl lysine isopeptide (Lys-Gly) (interchain with G-Cter in SUMO2) cross-link. An RRM domain is found at Asn-240 to Ser-318. Residues Lys-321 and Lys-362 each participate in a glycyl lysine isopeptide (Lys-Gly) (interchain with G-Cter in SUMO2) cross-link. Disordered stretches follow at residues Asp-368–Gln-409 and Glu-423–Arg-492. Basic residues predominate over residues Ser-377 to Arg-390. Ser-393 carries the post-translational modification Phosphoserine. Lys-405 participates in a covalent cross-link: Glycyl lysine isopeptide (Lys-Gly) (interchain with G-Cter in SUMO2). Residues Cys-426 to Asp-436 are compositionally biased toward basic and acidic residues. A Glycyl lysine isopeptide (Lys-Gly) (interchain with G-Cter in SUMO2) cross-link involves residue Lys-460. Residue Ser-471 is modified to Phosphoserine. Residues Lys-473–Ala-485 show a composition bias toward basic residues.

The protein belongs to the cyclophilin-type PPIase family. PPIL4 subfamily.

The protein localises to the nucleus. It catalyses the reaction [protein]-peptidylproline (omega=180) = [protein]-peptidylproline (omega=0). Functionally, PPIases accelerate the folding of proteins. It catalyzes the cis-trans isomerization of proline imidic peptide bonds in oligopeptides. This is Peptidyl-prolyl cis-trans isomerase-like 4 (Ppil4) from Mus musculus (Mouse).